Reading from the N-terminus, the 152-residue chain is Transcriptional repressor NrdR (152 aa).

The segment at 3–34 (CPFCNHGELKVIDSRNAPEANAIKRRRECLNC) is a zinc-finger region. The 91-residue stretch at 48–138 (LQVLKRDGRY…VYRRFKDVGE (91 aa)) folds into the ATP-cone domain.

Belongs to the NrdR family. Zn(2+) serves as cofactor.

Its function is as follows. Negatively regulates transcription of bacterial ribonucleotide reductase nrd genes and operons by binding to NrdR-boxes. The chain is Transcriptional repressor NrdR from Chlamydia abortus (strain DSM 27085 / S26/3) (Chlamydophila abortus).